The sequence spans 138 residues: Ig heavy chain V region TEPC 1017 (138 aa).

Residues Met1–Gln20 form the signal peptide. Positions Val21 to Thr49 are framework-1. A disulfide bond links Cys41 and Cys115. A complementarity-determining-1 region spans residues Asn50–His54. The interval Trp55 to Gly68 is framework-2. Positions Glu69–Asn85 are complementarity-determining-2. The framework-3 stretch occupies residues Lys86–Arg117. Residues Ser118–Tyr127 are complementarity-determining-3. A framework-4 region spans residues Trp128–Ala138.

This chain is Ig heavy chain V region TEPC 1017, found in Mus musculus (Mouse).